Consider the following 761-residue polypeptide: Probable ATP-dependent RNA helicase DDX20 (761 aa).

Positions V26 to L54 match the Q motif motif. Residues R48, Q53, A70–T77, and G73–C78 each bind ATP. In terms of domain architecture, Helicase ATP-binding spans I57–V231. A DEAD box motif is present at residues D175–D178. Positions S266–A415 constitute a Helicase C-terminal domain. Disordered stretches follow at residues P428 to T525 and H570 to Q720. Over residues K443–H456 the composition is skewed to basic and acidic residues. Residues Q498–L512 are compositionally biased toward polar residues. Low complexity-rich tracts occupy residues S600–S613 and E623–E635. A compositionally biased stretch (polar residues) spans T655–D679. The segment covering H683 to T707 has biased composition (basic residues).

It belongs to the DEAD box helicase family. DDX20 subfamily. As to quaternary structure, part of the core SMN complex.

It localises to the cytoplasm. It is found in the nucleus. The enzyme catalyses ATP + H2O = ADP + phosphate + H(+). It carries out the reaction a ribonucleoside 5'-triphosphate + H2O = a ribonucleoside 5'-diphosphate + phosphate + H(+). The SMN complex catalyzes the assembly of small nuclear ribonucleoproteins (snRNPs), the building blocks of the spliceosome, and thereby plays an important role in the splicing of cellular pre-mRNAs. Most spliceosomal snRNPs contain a common set of Sm proteins SNRPB, SNRPD1, SNRPD2, SNRPD3, SNRPE, SNRPF and SNRPG that assemble in a heptameric protein ring on the Sm site of the small nuclear RNA to form the core snRNP (Sm core). In the cytosol, the Sm proteins SNRPD1, SNRPD2, SNRPE, SNRPF and SNRPG are trapped in an inactive 6S pICln-Sm complex by the chaperone CLNS1A that controls the assembly of the core snRNP. To assemble core snRNPs, the SMN complex accepts the trapped 5Sm proteins from CLNS1A forming an intermediate. Binding of snRNA inside 5Sm triggers eviction of the SMN complex, thereby allowing binding of SNRPD3 and SNRPB to complete assembly of the core snRNP. May also play a role in the metabolism of small nucleolar ribonucleoprotein (snoRNPs). This is Probable ATP-dependent RNA helicase DDX20 (ddx20) from Danio rerio (Zebrafish).